Reading from the N-terminus, the 119-residue chain is Ribonuclease P protein component (119 aa).

Belongs to the RnpA family. In terms of assembly, consists of a catalytic RNA component (M1 or rnpB) and a protein subunit.

It carries out the reaction Endonucleolytic cleavage of RNA, removing 5'-extranucleotides from tRNA precursor.. In terms of biological role, RNaseP catalyzes the removal of the 5'-leader sequence from pre-tRNA to produce the mature 5'-terminus. It can also cleave other RNA substrates such as 4.5S RNA. The protein component plays an auxiliary but essential role in vivo by binding to the 5'-leader sequence and broadening the substrate specificity of the ribozyme. This Edwardsiella ictaluri (strain 93-146) protein is Ribonuclease P protein component.